The chain runs to 361 residues: Queuine tRNA-ribosyltransferase (361 aa).

Asp92 functions as the Proton acceptor in the catalytic mechanism. Residues 92–96, Asp146, Gln189, and Gly216 contribute to the substrate site; that span reads DSGGF. The interval 247 to 253 is RNA binding; sequence GVGKPAD. Asp266 (nucleophile) is an active-site residue. The segment at 271-275 is RNA binding; important for wobble base 34 recognition; sequence TRSGR. 4 residues coordinate Zn(2+): Cys304, Cys306, Cys309, and His335.

This sequence belongs to the queuine tRNA-ribosyltransferase family. In terms of assembly, homodimer. Within each dimer, one monomer is responsible for RNA recognition and catalysis, while the other monomer binds to the replacement base PreQ1. Zn(2+) serves as cofactor.

It catalyses the reaction 7-aminomethyl-7-carbaguanine + guanosine(34) in tRNA = 7-aminomethyl-7-carbaguanosine(34) in tRNA + guanine. Its pathway is tRNA modification; tRNA-queuosine biosynthesis. In terms of biological role, catalyzes the base-exchange of a guanine (G) residue with the queuine precursor 7-aminomethyl-7-deazaguanine (PreQ1) at position 34 (anticodon wobble position) in tRNAs with GU(N) anticodons (tRNA-Asp, -Asn, -His and -Tyr). Catalysis occurs through a double-displacement mechanism. The nucleophile active site attacks the C1' of nucleotide 34 to detach the guanine base from the RNA, forming a covalent enzyme-RNA intermediate. The proton acceptor active site deprotonates the incoming PreQ1, allowing a nucleophilic attack on the C1' of the ribose to form the product. After dissociation, two additional enzymatic reactions on the tRNA convert PreQ1 to queuine (Q), resulting in the hypermodified nucleoside queuosine (7-(((4,5-cis-dihydroxy-2-cyclopenten-1-yl)amino)methyl)-7-deazaguanosine). In Rickettsia canadensis (strain McKiel), this protein is Queuine tRNA-ribosyltransferase.